Here is a 1124-residue protein sequence, read N- to C-terminus: Probable leucine-rich repeat receptor-like protein kinase At2g33170 (1124 aa).

Positions 1–32 (MGWWIFEFKKESKSMFVGVLFLLTLLVWTSES) are cleaved as a signal peptide. Over 33 to 752 (LNSDGQFLLE…LKAGSARRGR (720 aa)) the chain is Extracellular. Residues Asn-72, Asn-96, and Asn-131 are each glycosylated (N-linked (GlcNAc...) asparagine). LRR repeat units lie at residues 86–109 (VVTS…GGLV), 110–132 (NLVY…IGNC), 134–156 (KLEV…INKL), 158–180 (QLRS…IGDL), 182–205 (NLEE…GNLN), 206–228 (KLTT…IGKC), 230–252 (NLKL…IGML), 254–277 (KLQE…GNLT), 278–300 (SLET…IGNM), 302–325 (SLKK…GKLS), 326–348 (KVME…LSKI), 350–371 (ELRL…ELSK), 374–397 (NLAK…QNLT), 398–420 (SMRQ…LGLY), 422–444 (PLWV…ICQQ), 446–468 (NLIL…VLRC), 470–491 (SLLQ…ELCK), 494–516 (NLSA…IGTC), 518–540 (KLQR…ISKL), 542–564 (NLVT…IANC), 566–588 (MLQR…LGSL), 590–613 (QLEI…GNLT), 614–636 (HLTE…LGLL), 638–661 (SLQI…IGNL), 663–686 (LLMY…ENLS), and 687–709 (SLLG…QIFQ). Asn-192 carries N-linked (GlcNAc...) asparagine glycosylation. N-linked (GlcNAc...) asparagine glycosylation occurs at Asn-275. N-linked (GlcNAc...) asparagine glycosylation occurs at Asn-314. A glycan (N-linked (GlcNAc...) asparagine) is linked at Asn-395. The N-linked (GlcNAc...) asparagine glycan is linked to Asn-494. Residue Asn-547 is glycosylated (N-linked (GlcNAc...) asparagine). Asn-611 carries N-linked (GlcNAc...) asparagine glycosylation. N-linked (GlcNAc...) asparagine glycosylation is found at Asn-644, Asn-684, Asn-692, Asn-697, and Asn-710. A helical membrane pass occupies residues 753 to 773 (IIIIVSSVIGGISLLLIAIVV). Residues 774–1124 (HFLRNPVEPT…CSDLPPPAPP (351 aa)) are Cytoplasmic-facing. Residues Thr-808 and Thr-816 each carry the phosphothreonine modification. One can recognise a Protein kinase domain in the interval 819-1100 (FHDSYIVGRG…TMREVVLMLI (282 aa)). ATP contacts are provided by residues 825-833 (VGRGACGTV) and Lys-847. 2 positions are modified to phosphotyrosine: Tyr-901 and Tyr-939. Catalysis depends on Asp-952, which acts as the Proton acceptor. Ser-986 carries the phosphoserine modification. Phosphotyrosine occurs at positions 994 and 1001. Thr-1002 carries the phosphothreonine modification.

The protein belongs to the protein kinase superfamily. Ser/Thr protein kinase family.

Its subcellular location is the membrane. The enzyme catalyses L-seryl-[protein] + ATP = O-phospho-L-seryl-[protein] + ADP + H(+). It catalyses the reaction L-threonyl-[protein] + ATP = O-phospho-L-threonyl-[protein] + ADP + H(+). The sequence is that of Probable leucine-rich repeat receptor-like protein kinase At2g33170 from Arabidopsis thaliana (Mouse-ear cress).